We begin with the raw amino-acid sequence, 213 residues long: Orotate phosphoribosyltransferase (213 aa).

Lys-26 serves as a coordination point for 5-phospho-alpha-D-ribose 1-diphosphate. 34-35 serves as a coordination point for orotate; it reads FF. 5-phospho-alpha-D-ribose 1-diphosphate is bound by residues 72 to 73, Arg-99, Lys-100, Lys-103, His-105, and 124 to 132; these read YK and DDVITAGTA. The orotate site is built by Thr-128 and Arg-156.

This sequence belongs to the purine/pyrimidine phosphoribosyltransferase family. PyrE subfamily. As to quaternary structure, homodimer. Mg(2+) serves as cofactor.

It catalyses the reaction orotidine 5'-phosphate + diphosphate = orotate + 5-phospho-alpha-D-ribose 1-diphosphate. Its pathway is pyrimidine metabolism; UMP biosynthesis via de novo pathway; UMP from orotate: step 1/2. In terms of biological role, catalyzes the transfer of a ribosyl phosphate group from 5-phosphoribose 1-diphosphate to orotate, leading to the formation of orotidine monophosphate (OMP). The polypeptide is Orotate phosphoribosyltransferase (Actinobacillus pleuropneumoniae serotype 5b (strain L20)).